The sequence spans 219 residues: Small ribosomal subunit protein uS3 (219 aa).

Residues 38-107 form the KH type-2 domain; sequence IREYIENKMK…RVHINVVEVK (70 aa).

Belongs to the universal ribosomal protein uS3 family. As to quaternary structure, part of the 30S ribosomal subunit. Forms a tight complex with proteins S10 and S14.

Functionally, binds the lower part of the 30S subunit head. Binds mRNA in the 70S ribosome, positioning it for translation. This Exiguobacterium sp. (strain ATCC BAA-1283 / AT1b) protein is Small ribosomal subunit protein uS3.